The sequence spans 647 residues: DNA mismatch repair protein MutL (647 aa).

2 disordered regions span residues 356-391 and 407-428; these read EGSQAPLPVTPQPRPALTSEKPVPAPQAQPQQSSIS and PRPQPSLRPQYQGSVTSKEALP. Residues 413-423 are compositionally biased toward polar residues; sequence LRPQYQGSVTS.

The protein belongs to the DNA mismatch repair MutL/HexB family.

Functionally, this protein is involved in the repair of mismatches in DNA. It is required for dam-dependent methyl-directed DNA mismatch repair. May act as a 'molecular matchmaker', a protein that promotes the formation of a stable complex between two or more DNA-binding proteins in an ATP-dependent manner without itself being part of a final effector complex. In Citrifermentans bemidjiense (strain ATCC BAA-1014 / DSM 16622 / JCM 12645 / Bem) (Geobacter bemidjiensis), this protein is DNA mismatch repair protein MutL.